The following is a 476-amino-acid chain: MAAAVGLRGLAVAGGGESTDSEDDGWEIGYLDRASQKLTGLLPTEEKNETFKKALTTGDISLVEELLDSGISIDSSFRYGWTPLMYAASVANVELVRVLLDRGANASFDKDKQTILITACSARGSEEQILKCVELLLSRNADPNVACRRLMTPVMYAARAGHPQVVAVLVAYGAEVNTQDENGYTALTWAARQGHKNVILKLLELGADKMLQTKDGKTPSEIAKRNKHLEIFNFLSLSLNPLEGKLQQLTKEETICKLLTTVSDKEKDHIFSSYAAFEDLEIFLHGLGLEHMTDLLKERDITLRHLLTMRKDEFTKNGITSRDQQKILAALKELEVEEIKFGELPEVAKLEISGDEFLNFLLKLNKQCGHLITAVQNIITELPVNSHKIVLEWASPQNFTSVCEELVSNVEDLSEEVCKLKDLIQKLQNERENDPTHIPSMDEVSSWNNRILKRTAFTVCGFGFLLFICKLTFQRK.

2 positions are modified to phosphoserine: serine 18 and serine 21. 6 ANK repeats span residues 46-75 (EKNE…SIDS), 79-108 (YGWT…NASF), 111-145 (DKQT…DPNV), 149-178 (RLMT…EVNT), 182-211 (NGYT…DKML), and 215-244 (DGKT…PLEG). The SAM domain maps to 273–335 (SYAAFEDLEI…KILAALKELE (63 aa)).

As to quaternary structure, interacts with DDX4, PIWIL1, RANBP9 and TDRD1.

It localises to the cytoplasm. Its function is as follows. Plays a central role during spermatogenesis by repressing transposable elements and preventing their mobilization, which is essential for the germline integrity. Acts via the piRNA metabolic process, which mediates the repression of transposable elements during meiosis by forming complexes composed of piRNAs and Piwi proteins and governs the methylation and subsequent repression of transposons. Its association with pi-bodies suggests a participation in the primary piRNAs metabolic process. Required prior to the pachytene stage to facilitate the production of multiple types of piRNAs, including those associated with repeats involved in the regulation of retrotransposons. May act by mediating protein-protein interactions during germ cell maturation. The polypeptide is Ankyrin repeat, SAM and basic leucine zipper domain-containing protein 1 (ASZ1) (Dasypus novemcinctus (Nine-banded armadillo)).